The chain runs to 364 residues: Acetylserotonin O-methyltransferase 1 (364 aa).

S-adenosyl-L-homocysteine is bound by residues Gly208, Asp231, Asp251, and Lys265. The active-site Proton acceptor is the His269. Active-site residues include Glu300 and Glu330.

It belongs to the class I-like SAM-binding methyltransferase superfamily. Cation-independent O-methyltransferase family. As to quaternary structure, homodimer. Expressed in leaves, stems and flowers.

It localises to the cytoplasm. The enzyme catalyses N-acetylserotonin + S-adenosyl-L-methionine = melatonin + S-adenosyl-L-homocysteine + H(+). Its pathway is aromatic compound metabolism; melatonin biosynthesis; melatonin from serotonin: step 1/2. Its function is as follows. Methyltransferase which catalyzes the transfer of a methyl group onto N-acetylserotonin, producing melatonin (N-acetyl-5-methoxytryptamine). This is Acetylserotonin O-methyltransferase 1 from Oryza sativa subsp. japonica (Rice).